The chain runs to 326 residues: ELMO domain-containing protein 1 (326 aa).

The ELMO domain maps to 133–306 (QHEEMLLKLW…KFRKRIIKQL (174 aa)).

Acts as a GTPase-activating protein (GAP) toward guanine nucleotide exchange factors like ARL2, ARL3, ARF1 and ARF6, but not for GTPases outside the Arf family. This Pongo abelii (Sumatran orangutan) protein is ELMO domain-containing protein 1 (ELMOD1).